The following is a 210-amino-acid chain: Aminoglycoside 2'-N-acetyltransferase (210 aa).

In terms of domain architecture, N-acetyltransferase spans 21–189; the sequence is IHTSDLDQET…SLFVLPVDLP (169 aa). Substrate-binding positions include Asp54 and 106–107; that span reads EA. CoA is bound by residues 108-110 and 115-120; these read VAV and RGDGLG. Substrate-binding positions include Ser141 and 176–177; that span reads ED.

The protein belongs to the AAC(2')-I acetyltransferase family. As to quaternary structure, homodimer.

Catalyzes the coenzyme A-dependent acetylation of the 2' hydroxyl or amino group of a broad spectrum of aminoglycosides. It confers resistance to aminoglycosides. This Mycolicibacterium smegmatis (strain ATCC 700084 / mc(2)155) (Mycobacterium smegmatis) protein is Aminoglycoside 2'-N-acetyltransferase (aac).